Reading from the N-terminus, the 142-residue chain is MAKKVQAYVKLQVAAGMANPSPPVGPALGQQGVNIMEFCKAFNAKTDSIEKGLPIPVVITVYADRSFTFVTKTPPAAVLLKKAAGIKSGSGKPNKDKVGKISRAQLQQIAQTKAADMTGADIEAMTRSIEGTARSMGLVVED.

Position 2 is a n,N,N-trimethylalanine (Ala-2). N6,N6,N6-trimethyllysine is present on residues Lys-4 and Lys-40.

This sequence belongs to the universal ribosomal protein uL11 family. Part of the ribosomal stalk of the 50S ribosomal subunit. Interacts with L10 and the large rRNA to form the base of the stalk. L10 forms an elongated spine to which L12 dimers bind in a sequential fashion forming a multimeric L10(L12)X complex. In terms of processing, one or more lysine residues are methylated.

In terms of biological role, forms part of the ribosomal stalk which helps the ribosome interact with GTP-bound translation factors. The chain is Large ribosomal subunit protein uL11 from Shigella flexneri.